A 185-amino-acid chain; its full sequence is Intraflagellar transport protein 22 homolog (185 aa).

Residues 10 to 17 (GPCESGKT), 63 to 67 (DCGGD), and 123 to 126 (HKPG) each bind GTP.

Belongs to the small GTPase superfamily. Rab family. As to quaternary structure, component of the IFT complex B, at least composed of IFT20, IFT22, IFT25, IFT27, IFT46, IFT52, TRAF3IP1/IFT54, IFT57, IFT74, IFT80, IFT81, and IFT88. Interacts with IFT88. Interacts with CFAP61.

It is found in the cell projection. Its subcellular location is the cilium. In terms of biological role, small GTPase-like component of the intraflagellar transport (IFT) complex B. This Bos taurus (Bovine) protein is Intraflagellar transport protein 22 homolog (IFT22).